A 176-amino-acid polypeptide reads, in one-letter code: MVKKIRIKKKIAVDELTDALAVAQSAVFTDYRGINTSELTTIRVKLREAGVGYRVLKNTLARRAADNTDHSNIKGAFEGPVAMAYSSNDVVAPARVLMDYISSSKSNLKVTGGYLSNKLISVEEVAELAKLPSREVLISKILAGMQSPITGLAMVLNGPARGLAIVLQARIKQLEG.

Belongs to the universal ribosomal protein uL10 family. Part of the ribosomal stalk of the 50S ribosomal subunit. The N-terminus interacts with L11 and the large rRNA to form the base of the stalk. The C-terminus forms an elongated spine to which L12 dimers bind in a sequential fashion forming a multimeric L10(L12)X complex.

Forms part of the ribosomal stalk, playing a central role in the interaction of the ribosome with GTP-bound translation factors. The polypeptide is Large ribosomal subunit protein uL10 (Dehalococcoides mccartyi (strain ATCC BAA-2100 / JCM 16839 / KCTC 5957 / BAV1)).